A 386-amino-acid polypeptide reads, in one-letter code: Endonuclease III homolog 2, chloroplastic (386 aa).

A chloroplast-targeting transit peptide spans 1-50 (MILTGAASTFPIVARVLNAMNRRMYAATTLSSAKSISAESLNLRSDSNSE). Residues 44–66 (RSDSNSEAAHGASESETRVSLRK) are disordered. The HhH domain maps to 252-278 (YDGDIPRTLEELLSLPGVGPKIAHLVL). Lys-272 acts as the Nucleophile; for N-glycosylase activity in catalysis. [4Fe-4S] cluster-binding residues include Cys-347, Cys-354, Cys-357, and Cys-363.

The protein belongs to the Nth/MutY family. [4Fe-4S] cluster is required as a cofactor.

The protein localises to the plastid. It localises to the chloroplast stroma. It is found in the chloroplast nucleoid. It catalyses the reaction 2'-deoxyribonucleotide-(2'-deoxyribose 5'-phosphate)-2'-deoxyribonucleotide-DNA = a 3'-end 2'-deoxyribonucleotide-(2,3-dehydro-2,3-deoxyribose 5'-phosphate)-DNA + a 5'-end 5'-phospho-2'-deoxyribonucleoside-DNA + H(+). Functionally, bifunctional DNA N-glycosylase with associated apurinic/apyrimidinic (AP) lyase function that catalyzes the first step in base excision repair (BER), the primary repair pathway for the repair of oxidative DNA damage. The DNA N-glycosylase activity releases the damaged DNA base from DNA by cleaving the N-glycosidic bond, leaving an AP site. The AP lyase activity cleaves the phosphodiester bond 3' to the AP site by a beta-elimination. Primarily recognizes and repairs oxidative base damage of pyrimidines. The polypeptide is Endonuclease III homolog 2, chloroplastic (NTH2) (Arabidopsis thaliana (Mouse-ear cress)).